Here is a 243-residue protein sequence, read N- to C-terminus: Ribosomal RNA small subunit methyltransferase G (243 aa).

S-adenosyl-L-methionine contacts are provided by residues G80, F85, 132 to 133 (IE), and R151.

It belongs to the methyltransferase superfamily. RNA methyltransferase RsmG family.

It localises to the cytoplasm. Its function is as follows. Specifically methylates the N7 position of a guanine in 16S rRNA. The polypeptide is Ribosomal RNA small subunit methyltransferase G (Synechococcus sp. (strain CC9902)).